Here is a 170-residue protein sequence, read N- to C-terminus: RNA pyrophosphohydrolase (170 aa).

Positions 6 to 149 (GFRPNVGIVI…KRDVYRRALK (144 aa)) constitute a Nudix hydrolase domain. The Nudix box motif lies at 38 to 59 (GGIDDGETPEQAMYRELYEEVG).

The protein belongs to the Nudix hydrolase family. RppH subfamily. It depends on a divalent metal cation as a cofactor.

Accelerates the degradation of transcripts by removing pyrophosphate from the 5'-end of triphosphorylated RNA, leading to a more labile monophosphorylated state that can stimulate subsequent ribonuclease cleavage. This Aliivibrio fischeri (strain ATCC 700601 / ES114) (Vibrio fischeri) protein is RNA pyrophosphohydrolase.